We begin with the raw amino-acid sequence, 172 residues long: Molybdopterin synthase catalytic subunit (172 aa).

S20 is modified (phosphoserine). Substrate contacts are provided by residues 127–128 (HR), K143, and 150–152 (KKE).

It belongs to the MoaE family. MOCS2B subfamily. In terms of assembly, heterotetramer; composed of 2 small (MOCS2A) and 2 large (MOCS2B) subunits.

The protein localises to the cytoplasm. Its subcellular location is the cytosol. The enzyme catalyses 2 [molybdopterin-synthase sulfur-carrier protein]-C-terminal-Gly-aminoethanethioate + cyclic pyranopterin phosphate + H2O = molybdopterin + 2 [molybdopterin-synthase sulfur-carrier protein]-C-terminal Gly-Gly + 2 H(+). The protein operates within cofactor biosynthesis; molybdopterin biosynthesis. Catalytic subunit of the molybdopterin synthase complex, a complex that catalyzes the conversion of precursor Z into molybdopterin. Acts by mediating the incorporation of 2 sulfur atoms from thiocarboxylated MOCS2A into precursor Z to generate a dithiolene group. The protein is Molybdopterin synthase catalytic subunit of Pongo abelii (Sumatran orangutan).